The chain runs to 1495 residues: Ras GTPase-activating-like protein IQG1 (1495 aa).

The Calponin-homology (CH) domain occupies 108–221 (LCRVSEVKIW…ILISMINKKW (114 aa)). Residue T264 is modified to Phosphothreonine. S268 carries the post-translational modification Phosphoserine. T299 is subject to Phosphothreonine. 7 IQ domains span residues 447-467 (EQDI…VLSS), 538-567 (SHYP…KLND), 568-597 (ERES…AVHD), 599-628 (HKEN…SLGK), 629-658 (ENCN…PENN), 687-716 (EYNN…FYKR), and 717-746 (NVRS…CPNP). Positions 759 to 798 (NGTATIEEVQNQLESCQASLDSENMKKERLLKSIRQQLNI) form a coiled coil. The Ras-GAP domain maps to 876 to 1100 (SYFTRFVCEM…PHIKDVLYNV (225 aa)).

As to quaternary structure, interacts with AFR1. Interacts with AKR1. Interacts with activated CDC42. Interacts with calmodulin CMD1. Interacts with myosin MYO1 and its light chain MLC1. Interacts with BUD4. Interacts with INN1. Interacts with SEC3. Interacts with TEM1.

The protein localises to the bud neck. Its function is as follows. Required for the assembly and the contraction of the actomyosin ring at the bud neck during cytokinesis. Seems to be involved in additional tasks during cell division like axial bud-site selection and targeted secretion by recruiting the spatial landmark BUD4, the septin CDC12 and the secretion landmark SEC3 to the bud neck. May be regulated by calcium ions. This Saccharomyces cerevisiae (strain ATCC 204508 / S288c) (Baker's yeast) protein is Ras GTPase-activating-like protein IQG1 (IQG1).